The following is a 1163-amino-acid chain: Reticulon-4 (1163 aa).

Met-1 carries the post-translational modification N-acetylmethionine. Disordered regions lie at residues Met-1–Glu-184 and Ser-244–Asn-270. Topologically, residues Met-1–Gly-989 are cytoplasmic. 2 positions are modified to phosphoserine: Ser-7 and Ser-16. A compositionally biased stretch (low complexity) spans Ser-7–Ser-16. Positions Glu-31–Glu-55 are enriched in acidic residues. The segment covering Ala-62–Leu-79 has biased composition (low complexity). The span at Pro-87–Ala-101 shows a compositional bias: pro residues. At Ser-107 the chain carries Phosphoserine. Residues Ala-138–Gly-147 are compositionally biased toward pro residues. Phosphoserine is present on residues Ser-149, Ser-169, and Ser-171. Residues Ser-329, Ser-333, and Ser-343 each carry the phosphoserine modification. Thr-347 bears the Phosphothreonine mark. A compositionally biased stretch (basic and acidic residues) spans Asp-406–Asp-423. 2 disordered regions span residues Asp-406 to Ser-437 and Thr-454 to Lys-474. The residue at position 425 (Ser-425) is a Phosphoserine. Thr-429 is modified (phosphothreonine). A compositionally biased stretch (basic and acidic residues) spans Leu-461 to Lys-474. Phosphoserine occurs at positions 488, 689, 726, 766, and 830. Position 832 is a phosphothreonine (Thr-832). Phosphoserine occurs at positions 855, 922, and 962. A Reticulon domain is found at Val-976–Asp-1163. The chain crosses the membrane as a helical span at residues Val-990–Val-1010. Topologically, residues Thr-1011–Ala-1104 are lumenal. Lys-1075 carries the post-translational modification N6-acetyllysine. The helical transmembrane segment at Leu-1105–Ile-1125 threads the bilayer. The Cytoplasmic portion of the chain corresponds to Tyr-1126 to Asp-1163.

Binds to RTN4R. Interacts with ATL1. Interacts with TMEM170A. Interacts with RTN4IP1. As to quaternary structure, interacts in trans with CNTNAP1. Interacts with REEP5. Interacts with synaptic plasticity regulator PANTS; the interaction results in enhanced RTN4-mediated inhibition of AMPA receptor clustering. Interacts with GPR50. In terms of assembly, homodimer. Interacts with BAD/Bcl-xl and BCL2. Interact with RTN3. Interacts with NGBR. Interacts with SPTLC1. Interacts with GRAMD4. Interacts with CDH5. Interacts with BACE1 and BACE2. Interacts with REEP5. Interacts with RETREG3. Interacts with BACE1 and BACE2. Interacts with TMEM33. Isoforms A, B and C are present in optic nerve, spinal cord and cerebral cortex. Isoforms A and B are present in dorsal root ganglion, sciatic nerve and PC12 cells after longer exposure. Isoforms B and C are detected in kidney, cartilage, skin, lung and spleen. Isoform C is expressed at high level in skeletal muscle. In adult animals isoform A is expressed mainly in the nervous system.

The protein resides in the endoplasmic reticulum membrane. Its subcellular location is the cell membrane. The protein localises to the synapse. It is found in the cell junction. Its function is as follows. Required to induce the formation and stabilization of endoplasmic reticulum (ER) tubules. They regulate membrane morphogenesis in the ER by promoting tubular ER production. They influence nuclear envelope expansion, nuclear pore complex formation and proper localization of inner nuclear membrane proteins. However each isoform have specific functions mainly depending on their tissue expression specificities. Developmental neurite growth regulatory factor with a role as a negative regulator of axon-axon adhesion and growth, and as a facilitator of neurite branching. Regulates neurite fasciculation, branching and extension in the developing nervous system. Involved in down-regulation of growth, stabilization of wiring and restriction of plasticity in the adult CNS. Regulates the radial migration of cortical neurons via an RTN4R-LINGO1 containing receptor complex. Acts as a negative regulator of central nervous system angiogenesis. Inhibits spreading, migration and sprouting of primary brain microvascular endothelial cells (MVECs). Also induces the retraction of MVECs lamellipodia and filopodia in a ROCK pathway-dependent manner. In terms of biological role, mainly function in endothelial cells and vascular smooth muscle cells, is also involved in immune system regulation. Modulator of vascular remodeling, promotes the migration of endothelial cells but inhibits the migration of vascular smooth muscle cells. Regulates endothelial sphingolipid biosynthesis with direct effects on vascular function and blood pressure. Inhibits serine palmitoyltransferase, SPTLC1, the rate-limiting enzyme of the novo sphingolipid biosynthetic pathway, thereby controlling production of endothelial sphingosine-1-phosphate (S1P). Required to promote macrophage homing and functions such as cytokine/chemokine gene expression involved in angiogenesis, arteriogenesis and tissue repair. Mediates ICAM1 induced transendothelial migration of leukocytes such as monocytes and neutrophils and acute inflammation. Necessary for immune responses triggered by nucleic acid sensing TLRs, such as TLR9, is required for proper TLR9 location to endolysosomes. Also involved in immune response to LPS. Plays a role in liver regeneration through the modulation of hepatocytes proliferation. Reduces the anti-apoptotic activity of Bcl-xl and Bcl-2. This is likely consecutive to their change in subcellular location, from the mitochondria to the endoplasmic reticulum, after binding and sequestration. With isoform C, inhibits BACE1 activity and amyloid precursor protein processing. Functionally, regulates cardiomyocyte apoptosis upon hypoxic conditions. With isoform B, inhibits BACE1 activity and amyloid precursor protein processing. In Rattus norvegicus (Rat), this protein is Reticulon-4 (Rtn4).